Here is a 151-residue protein sequence, read N- to C-terminus: Guanylate kinase homolog (151 aa).

In terms of domain architecture, Guanylate kinase-like spans 1 to 141 (MEREGVDYHY…AYSKLIQILQ (141 aa)).

The protein belongs to the guanylate kinase family.

The protein is Guanylate kinase homolog of Vaccinia virus (strain Copenhagen) (VACV).